We begin with the raw amino-acid sequence, 292 residues long: RNA 5'-monophosphate methyltransferase (292 aa).

Positions 1–22 (MAASTEQATGGVEKTAAEEKPR) are disordered. Residues Arg-46, Asn-76, Asp-110, 135-136 (DF), and Met-164 contribute to the S-adenosyl-L-methionine site. Positions 53–274 (ELLRRLFPQS…KQATETHPIP (222 aa)) constitute a Bin3-type SAM domain.

It belongs to the methyltransferase superfamily. Interacts with DICER1; the interaction may be mediated by RNA.

It localises to the cytoplasm. It carries out the reaction a 5'-end 5'-phospho-ribonucleoside-RNA + S-adenosyl-L-methionine = a 5'-end (5'-methylphospho)-ribonucleoside-RNA + S-adenosyl-L-homocysteine. The enzyme catalyses a 5'-end 5'-phospho-ribonucleoside-RNA + 2 S-adenosyl-L-methionine = a 5'-end (5'-bismethylphospho)-ribonucleoside-RNA + 2 S-adenosyl-L-homocysteine. O-methyltransferase that specifically monomethylates 5'-monophosphate of cytoplasmic histidyl tRNA (tRNA(His)), acting as a capping enzyme by protecting tRNA(His) from cleavage by DICER1. Also able, with less efficiently, to methylate the 5' monophosphate of a subset of pre-miRNAs, acting as a negative regulator of miRNA processing. The 5' monophosphate of pre-miRNAs is recognized by DICER1 and is required for pre-miRNAs processing: methylation at this position reduces the processing of pre-miRNAs by DICER1. Was also reported to mediate dimethylation of pre-miR-145; however dimethylation cannot be reproduced by another group which observes a monomethylation of pre-miR-145. This Bos taurus (Bovine) protein is RNA 5'-monophosphate methyltransferase (BCDIN3D).